The following is a 350-amino-acid chain: MFS transporter OpS2 (350 aa).

8 consecutive transmembrane segments (helical) span residues 3 to 23 (FLAG…VADL), 34 to 54 (GYFF…GGIL), 65 to 85 (WGAV…LPET), 141 to 161 (FMTC…NLAI), 174 to 194 (AIIL…ASVV), 227 to 247 (MCEN…VFGW), 253 to 273 (IFWF…SLIF), and 312 to 332 (PLLG…ICWA).

This sequence belongs to the major facilitator superfamily.

Its subcellular location is the cell membrane. In terms of biological role, MFS transporter; part of the gene cluster that mediates the biosynthesis of the bibenzoquinone oosporein, a metabolite required for fungal virulence that acts by evading host immunity to facilitate fungal multiplication in insects. The function of this putative MFS transporter remains unclear since its deletion leads to increased oosporein production. This chain is MFS transporter OpS2, found in Beauveria bassiana (strain ARSEF 2860) (White muscardine disease fungus).